Reading from the N-terminus, the 156-residue chain is Small ribosomal subunit protein uS7 (156 aa).

It belongs to the universal ribosomal protein uS7 family. In terms of assembly, part of the 30S ribosomal subunit. Contacts proteins S9 and S11.

One of the primary rRNA binding proteins, it binds directly to 16S rRNA where it nucleates assembly of the head domain of the 30S subunit. Is located at the subunit interface close to the decoding center, probably blocks exit of the E-site tRNA. This Latilactobacillus sakei subsp. sakei (strain 23K) (Lactobacillus sakei subsp. sakei) protein is Small ribosomal subunit protein uS7.